Here is a 1827-residue protein sequence, read N- to C-terminus: Phenolphthiocerol/phthiocerol polyketide synthase subunit C (1827 aa).

Residues 35-461 enclose the Ketosynthase family 3 (KS3) domain; it reads CEPVAVVGIG…GTNAHVVVEQ (427 aa). Catalysis depends on for beta-ketoacyl synthase activity residues Cys-207, His-342, and His-383. The interval 566–876 is acyltransferase; that stretch reads VFVYSGQGSQ…LAAVGVAASE (311 aa). The active-site For malonyltransferase activity is the Ser-654. Positions 910–1037 are N-terminal hotdog fold; sequence HPLLGAHIEM…AKVEQSPREC (128 aa). Residues 910–1076 are dehydratase; the sequence is HPLLGAHIEM…QHHGPAFAAL (167 aa). The PKS/mFAS DH domain maps to 910–1198; the sequence is HPLLGAHIEM…LRRVERRAVP (289 aa). Residue His-942 is the Proton acceptor; for dehydratase activity of the active site. The segment at 1050–1198 is C-terminal hotdog fold; that stretch reads GTTVSPADFY…LRRVERRAVP (149 aa). The active-site Proton donor; for dehydratase activity is the Asp-1111. Positions 1439 to 1617 are beta-ketoacyl reductase; that stretch reads ASYVVTGGLG…VINWGPWSEV (179 aa). 1440-1485 is an NADP(+) binding site; it reads SYVVTGGLGGLGLVVARWLVDRGAGRVVLGGRSDPTDEQCNVLAEL. Residues 1706-1785 enclose the Carrier domain; sequence RAVTERMCAR…DLTADLMRQL (80 aa). An O-(pantetheine 4'-phosphoryl)serine modification is found at Ser-1745. A compositionally biased stretch (basic residues) spans 1807-1820; that stretch reads RAAARHGAAMRRRP. A disordered region spans residues 1807–1827; the sequence is RAAARHGAAMRRRPKPEVQGG.

It depends on NADP(+) as a cofactor. Pantetheine 4'-phosphate is required as a cofactor.

It catalyses the reaction icosanoyl-[(phenol)carboxyphthiodiolenone synthase] + 2 (S)-methylmalonyl-CoA + 3 malonyl-CoA + 5 NADPH + 10 H(+) = C32-carboxyphthiodiolenone-[(phenol)carboxyphthiodiolenone synthase] + 5 CO2 + 5 NADP(+) + 5 CoA + 2 H2O. The catalysed reaction is docosanoyl-[(phenol)carboxyphthiodiolenone synthase] + 2 (S)-methylmalonyl-CoA + 3 malonyl-CoA + 5 NADPH + 10 H(+) = C34-carboxyphthiodiolenone-[(phenol)carboxyphthiodiolenone synthase] + 5 CO2 + 5 NADP(+) + 5 CoA + 2 H2O. The enzyme catalyses 17-(4-hydroxyphenyl)heptadecanoyl-[(phenol)carboxyphthiodiolenone synthase] + 2 (S)-methylmalonyl-CoA + 3 malonyl-CoA + 5 NADPH + 10 H(+) = C35-(phenol)carboxyphthiodiolenone-[(phenol)carboxyphthiodiolenone synthase] + 5 CO2 + 5 NADP(+) + 5 CoA + 2 H2O. It carries out the reaction 19-(4-hydroxyphenyl)nonadecanoyl-[(phenol)carboxyphthiodiolenone synthase] + 2 (S)-methylmalonyl-CoA + 3 malonyl-CoA + 5 NADPH + 10 H(+) = C37-(phenol)carboxyphthiodiolenone-[(phenol)carboxyphthiodiolenone synthase] + 5 CO2 + 5 NADP(+) + 5 CoA + 2 H2O. The protein operates within lipid metabolism; fatty acid biosynthesis. Functionally, part of the PpsABCDE complex involved in the biosynthesis of the lipid core common to phthiocerols and phenolphthiocerols by successive additions of malonyl-CoA or methylmalonyl-CoA extender units. PpsA can accept as substrate the activated forms of either icosanoyl (C20), docosanoyl (C22) or lignoceroyl (C24) groups from FadD26, or a (4-hydroxyphenyl)-C17 or (4-hydroxyphenyl)-C19 fatty acyl from FadD29. PpsA initiates the biosynthesis and extends its substrate using a malonyl-CoA extender unit. The PpsB and PpsC proteins add the second and third malonyl-CoA extender units. PpsD adds an (R)-methylmalonyl unit and PpsE adds a second (R)-methylmalonyl unit. The incorporation of the methylmalonyl units results in formation of two branched methyl groups in the elongated product. The protein is Phenolphthiocerol/phthiocerol polyketide synthase subunit C (ppsD) of Mycobacterium tuberculosis (strain CDC 1551 / Oshkosh).